The primary structure comprises 200 residues: Large ribosomal subunit protein uL4 (200 aa).

Residues 38 to 72 (GRQGSKQQKTRSDVSGGGKRPWRQKGTGRARAGTI) form a disordered region.

It belongs to the universal ribosomal protein uL4 family. As to quaternary structure, part of the 50S ribosomal subunit.

In terms of biological role, one of the primary rRNA binding proteins, this protein initially binds near the 5'-end of the 23S rRNA. It is important during the early stages of 50S assembly. It makes multiple contacts with different domains of the 23S rRNA in the assembled 50S subunit and ribosome. Functionally, forms part of the polypeptide exit tunnel. The polypeptide is Large ribosomal subunit protein uL4 (Pseudomonas fluorescens (strain ATCC BAA-477 / NRRL B-23932 / Pf-5)).